Here is a 311-residue protein sequence, read N- to C-terminus: MEFHHVSVLLNECIENLNIKPDGVYVDCTMGGAGHSKEIVKKLSDKGLFIGFDQDKNAISTAKERLSEYESRVKFVHSNFENIKEELEKIGVYKIDGVLADLGVSSHQLDEADRGFSYMQDAPLDMRMDVRCEFSAYDVVNTYTEDELTKIIKDYGEDNWAKRIAKFIVEERANKPIETTGELVDVIKKAIPKKARIVGPHPAKRTFQAIRIEVNNELGVITKMINDASSIMNEGGRICIITFHSLEDRIVKNAFKHLASDCICPQHLPICQCDKESEVKIITRKPILPSEEEIEVNPRSRSAKLRVAEKI.

Residues 33-35 (AGH), Asp53, Phe80, Asp101, and Gln108 contribute to the S-adenosyl-L-methionine site.

The protein belongs to the methyltransferase superfamily. RsmH family.

It localises to the cytoplasm. It carries out the reaction cytidine(1402) in 16S rRNA + S-adenosyl-L-methionine = N(4)-methylcytidine(1402) in 16S rRNA + S-adenosyl-L-homocysteine + H(+). Functionally, specifically methylates the N4 position of cytidine in position 1402 (C1402) of 16S rRNA. This Clostridioides difficile (strain 630) (Peptoclostridium difficile) protein is Ribosomal RNA small subunit methyltransferase H.